Reading from the N-terminus, the 78-residue chain is MAAHCQVTGAQPGFGHSISHSHRRTKRRWNPNIQKKRYWVPSLRRNVTLNLSAKGIKVIDARGIDAVVNELIARGEKI.

A disordered region spans residues 1-30; the sequence is MAAHCQVTGAQPGFGHSISHSHRRTKRRWN. Basic residues predominate over residues 19-30; it reads SHSHRRTKRRWN.

It belongs to the bacterial ribosomal protein bL28 family.

The polypeptide is Large ribosomal subunit protein bL28 (Kocuria rhizophila (strain ATCC 9341 / DSM 348 / NBRC 103217 / DC2201)).